Reading from the N-terminus, the 702-residue chain is Methionine--tRNA ligase (702 aa).

Positions 23–33 (PYANGPLHLGH) match the 'HIGH' region motif. Zn(2+) is bound by residues Cys-154, Cys-157, Cys-167, and Cys-170. The short motif at 341–345 (KMSKS) is the 'KMSKS' region element. Lys-344 is a binding site for ATP. The interval 562-593 (LAPPPASAKQQNASMSNTAPPPTAEEPETTAP) is disordered. Polar residues predominate over residues 569–578 (AKQQNASMSN). The 104-residue stretch at 599-702 (DFAKLDLRIG…SSAQPGMPVR (104 aa)) folds into the tRNA-binding domain.

It belongs to the class-I aminoacyl-tRNA synthetase family. MetG type 1 subfamily. Homodimer. Zn(2+) is required as a cofactor.

The protein localises to the cytoplasm. It catalyses the reaction tRNA(Met) + L-methionine + ATP = L-methionyl-tRNA(Met) + AMP + diphosphate. Its function is as follows. Is required not only for elongation of protein synthesis but also for the initiation of all mRNA translation through initiator tRNA(fMet) aminoacylation. This Xylella fastidiosa (strain M12) protein is Methionine--tRNA ligase.